Consider the following 299-residue polypeptide: tRNA pseudouridine synthase B (299 aa).

The Nucleophile role is filled by D39.

Belongs to the pseudouridine synthase TruB family. Type 1 subfamily.

The catalysed reaction is uridine(55) in tRNA = pseudouridine(55) in tRNA. Functionally, responsible for synthesis of pseudouridine from uracil-55 in the psi GC loop of transfer RNAs. The chain is tRNA pseudouridine synthase B from Syntrophomonas wolfei subsp. wolfei (strain DSM 2245B / Goettingen).